The following is a 753-amino-acid chain: Oligopeptide transporter 5 (753 aa).

15 consecutive transmembrane segments (helical) span residues 56 to 76, 80 to 100, 132 to 152, 163 to 183, 224 to 244, 296 to 316, 368 to 388, 432 to 452, 461 to 481, 506 to 528, 544 to 564, 583 to 603, 615 to 635, 662 to 682, and 695 to 715; these read TWFL…FFGY, PLTV…KLMA, ITIF…LTIV, AAAM…AGMF, FFLI…YLFP, FFAI…ILPI, YLSI…TATI, WWFV…CEGF, WGLL…GVIL, PLAN…YFVG, FIVQ…TTWW, PWTC…GIIG, PGMN…WFFA, AKAV…YYIF, and ILSA…YFAL.

This sequence belongs to the oligopeptide OPT transporter (TC 2.A.67.1) family. Expressed predominantly in flowers, and at a very low level in leaves and roots.

The protein resides in the membrane. In terms of biological role, involved in the translocation of tetra- and pentapeptides across the cellular membrane in an energy-dependent manner. In Arabidopsis thaliana (Mouse-ear cress), this protein is Oligopeptide transporter 5 (OPT5).